The following is a 50-amino-acid chain: Defensin D2 (50 aa).

Cystine bridges form between Cys3–Cys50, Cys14–Cys35, Cys20–Cys44, and Cys24–Cys46.

In terms of processing, contains 4 disulfide bonds.

The protein localises to the secreted. Functionally, antimicrobial peptide active against fungi, Gram-positive and Gram-negative bacteria. Inhibits growth of hyphae in the fungi A.niger (IC(50)=3.5 ug/ml), B.sorokiniana (IC(50)=1.8 ug/ml), F.oxysporum (IC(50)=5.3 ug/ml), F.graminearum (IC(50)=6.9 ug/ml), F.culmorum (IC(50)=6.9 ug/ml) and B.cinerea (IC(50)=13.7 ug/ml). Has no effect on spore germination. Destroys spores in germinated conidia by disruption of cell walls and membranes in A.niger and B.sorokiniana. Causes vacuolization of germinated macro- and microconidia in F.oxysporum, F.graminearum and F.culmorum. Strongly inhibits growth of P.infestans on potato tubers above concentrations of 3.4 ug/ml. Inhibits growth of Gram-positive bacteria C.michiganensis and B.subtilis and of Gram-negative bacteria P.syringae, E.carotovora and E.coli. The protein is Defensin D2 of Nigella sativa (Black cumin).